A 426-amino-acid chain; its full sequence is Diaminobutyrate--2-oxoglutarate transaminase (426 aa).

Lys272 is modified (N6-(pyridoxal phosphate)lysine).

This sequence belongs to the class-III pyridoxal-phosphate-dependent aminotransferase family. Requires pyridoxal 5'-phosphate as cofactor.

The catalysed reaction is L-2,4-diaminobutanoate + 2-oxoglutarate = L-aspartate 4-semialdehyde + L-glutamate. It functions in the pathway amine and polyamine biosynthesis; ectoine biosynthesis; L-ectoine from L-aspartate 4-semialdehyde: step 1/3. In terms of biological role, catalyzes reversively the conversion of L-aspartate beta-semialdehyde (ASA) to L-2,4-diaminobutyrate (DABA) by transamination with L-glutamate. This is Diaminobutyrate--2-oxoglutarate transaminase (ectB) from Sporosarcina pasteurii (Bacillus pasteurii).